A 754-amino-acid polypeptide reads, in one-letter code: MASLEVFVLYLRIFFISFMSRARSLFSFVTSPAITAEHGKVQKLQAKPGSDRAPDSWIQYRHSKLVDPSTYNDLGLCGGLPLRVHKHAHLADKGARRAQEDWKRLVGPIRNFTGCLSPRFNGIAVAIPECIPERLEAVTYANEFAFLHDDILDTVGKEDGEEENNEMARGFESVLEPSRNVKMSVSGKSQMQAKLILELLDLDESQAMVLLKSWEGLVKGESGSQHFDFQSLDEYLPHRVVNLGQTFWFGIITFAMGLTVSNEEMELTKPITEPAYATLALANDFFSWEKEYVEFQGNPTSGNMANAVWIIMKEHSVDLEEAKVICQDKIRESCEEYRRRKREFELQSAEQVSIDAHRYLSALEFSISGNVVWSQYTERYHFHKPEHWRQVENVDDDGNKSDDSGIAMKDSPESTVVDVEDNVPSTFLNFGSSGTNIRSKKTLVSPVLETKLPEMTNQVVLAPFQYVSSLPSKKVRHHAIDALNIWFSVPEADLNMIKDAIDQLHNASLMLDDIEDNSPLRRGHPSTHMIYGISQTINSANNLFVMSLDTIRQLKSPDCLDVFISELKRLHIGQSLDLFWTSNVQCPTLEEYYKMVDYKTGGLFQMVAKLMGAKSPKSKRKVPDVSTLTTLFGRYFQIRDDYQNLMSKEYTDQKGFCEDLDEGKFSLPLIHCLTTSPNIRLQSILHQRKTMGKMSFETKKLVLDHLEETKSLEYTKEMLDCLHVRLHKELDVLEKQTGVNNFLLRLLLKRLHVK.

A signal peptide spans 1–24; that stretch reads MASLEVFVLYLRIFFISFMSRARS. The segment at 58-388 is sesterterpene synthase; the sequence is IQYRHSKLVD…RYHFHKPEHW (331 aa). The Mg(2+) site is built by Asp-149 and Asp-153. The interval 389–753 is geranylfarnesyl diphosphate synthase; sequence RQVENVDDDG…LRLLLKRLHV (365 aa). Positions 392-403 are enriched in basic and acidic residues; that stretch reads ENVDDDGNKSDD. The tract at residues 392–414 is disordered; sequence ENVDDDGNKSDDSGIAMKDSPES. The Mg(2+) site is built by Asp-512 and Asp-516.

The protein in the N-terminal section; belongs to the terpene synthase family. It in the C-terminal section; belongs to the FPP/GGPP synthase family. Requires Mg(2+) as cofactor.

It catalyses the reaction (2E,6E,10E,14E)-geranylfarnesyl diphosphate = preasperterpenoid A + diphosphate. It functions in the pathway secondary metabolite biosynthesis; terpenoid biosynthesis. Its function is as follows. Bifunctional sesterterpene synthase; part of the gene cluster that mediates the biosynthesis of the asperterpenoids, sesterterpenes that exhibit anti-tuberculosis activity. The first step of the pathway is performed by the sesterterpene synthase astC that possesses both prenyl transferase and terpene cyclase activity, converting isopentenyl diphosphate and dimethylallyl diphosphate into geranylfarnesyl diphosphate (GFPP) and further converting GFPP into preasperterpenoid A, respectively. The cytochrome P450 monooxygenase astB then dually oxidizes preasperterpenoid A to produce asperterpenoid A along with a minor product, asperterpenoid B. Finally, the cytochrome P450 monooxygenase astA converts asperterpenoid A into asperterpenoid C. The sequence is that of Bifunctional sesterterpene synthase astC from Talaromyces wortmannii (Penicillium wortmannii).